Here is a 596-residue protein sequence, read N- to C-terminus: Elongation factor 4 (596 aa).

A tr-type G domain is found at 2–184 (KHIRNFSIIA…VIVEQIPPPE (183 aa)). Residues 14–19 (DHGKST) and 131–134 (NKID) contribute to the GTP site.

This sequence belongs to the TRAFAC class translation factor GTPase superfamily. Classic translation factor GTPase family. LepA subfamily.

The protein localises to the cell inner membrane. The catalysed reaction is GTP + H2O = GDP + phosphate + H(+). Required for accurate and efficient protein synthesis under certain stress conditions. May act as a fidelity factor of the translation reaction, by catalyzing a one-codon backward translocation of tRNAs on improperly translocated ribosomes. Back-translocation proceeds from a post-translocation (POST) complex to a pre-translocation (PRE) complex, thus giving elongation factor G a second chance to translocate the tRNAs correctly. Binds to ribosomes in a GTP-dependent manner. This chain is Elongation factor 4, found in Shewanella oneidensis (strain ATCC 700550 / JCM 31522 / CIP 106686 / LMG 19005 / NCIMB 14063 / MR-1).